The chain runs to 112 residues: UPF0102 protein CHAB381_0216 (112 aa).

This sequence belongs to the UPF0102 family.

This Campylobacter hominis (strain ATCC BAA-381 / DSM 21671 / CCUG 45161 / LMG 19568 / NCTC 13146 / CH001A) protein is UPF0102 protein CHAB381_0216.